The primary structure comprises 343 residues: Vancomycin C-type resistance protein VanC1 (343 aa).

The 203-residue stretch at 134-336 folds into the ATP-grasp domain; that stretch reads HQLADTMGIA…YEILVEQLIA (203 aa). Residue 164-219 participates in ATP binding; sequence IQDHGFPIFIKPNEAGSSKGITKVTDKTALQSALTTAFAYGSTVLIQKAIAGIEIG. Residues Asp290, Glu303, and Asn305 each contribute to the Mg(2+) site. 3 residues coordinate Mn(2+): Asp290, Glu303, and Asn305.

Belongs to the D-alanine--D-alanine ligase family. The cofactor is Mg(2+). It depends on Mn(2+) as a cofactor.

It is found in the cell membrane. It carries out the reaction D-serine + D-alanine + ATP = D-alanyl-D-serine + ADP + phosphate + H(+). Functionally, D-alanine--D-alanine ligase of altered specificity, which catalyzes synthesis of D-Ala-D-Ser; produces a peptidoglycan which does not terminate in D-alanine but in D-serine, thus probably reducing affinity for vancomycin. Together with VanT and VanXYC, required for vancomycin resistance in E.gallinarum strain BM4174. This Enterococcus gallinarum protein is Vancomycin C-type resistance protein VanC1.